Consider the following 106-residue polypeptide: Thioredoxin (106 aa).

The 105-residue stretch at 2–106 folds into the Thioredoxin domain; it reads VNFLKTKADF…GLREKIKKNK (105 aa). Residues C32 and C35 each act as nucleophile in the active site. C32 and C35 are oxidised to a cystine.

Belongs to the thioredoxin family.

It localises to the cytoplasm. Functionally, participates in various redox reactions through the reversible oxidation of its active center dithiol to a disulfide and catalyzes dithiol-disulfide exchange reactions. The chain is Thioredoxin (THIO) from Geodia cydonium (Sponge).